The sequence spans 258 residues: Enterotoxin type D (258 aa).

Positions 1 to 25 (MKKFNILIALLFFTSLVISPLNVKA) are cleaved as a signal peptide. Zn(2+) contacts are provided by aspartate 212, histidine 248, histidine 250, and aspartate 252.

It belongs to the staphylococcal/streptococcal toxin family. As to quaternary structure, homodimer; zinc-dependent. Interacts with MHC class II molecules composed of alpha/HLA-DRA and beta/HLA-DRB1 chains. Zn(2+) is required as a cofactor.

It localises to the secreted. Staphylococcal enterotoxin that activates the host immune system by binding as unprocessed molecules to major histocompatibility (MHC) complex class II and T-cell receptor (TCR) molecules. In turn, this ternary complex activates a large number of T-lymphocytes initiating a systemic release of pro-inflammatory cytokines. In addition, induces B-cell proliferation and differentiation in the presence of T-cells. Causes also the intoxication staphylococcal food poisoning syndrome. This Staphylococcus aureus protein is Enterotoxin type D (entD).